A 158-amino-acid chain; its full sequence is 2-C-methyl-D-erythritol 2,4-cyclodiphosphate synthase (158 aa).

2 residues coordinate a divalent metal cation: aspartate 9 and histidine 11. 4-CDP-2-C-methyl-D-erythritol 2-phosphate contacts are provided by residues 9 to 11 (DVH) and 35 to 36 (HS). Histidine 43 serves as a coordination point for a divalent metal cation. 4-CDP-2-C-methyl-D-erythritol 2-phosphate contacts are provided by residues 57-59 (DIG), 62-66 (FPDTD), 101-107 (AQRPKMA), 133-136 (TTTE), phenylalanine 140, and arginine 143.

This sequence belongs to the IspF family. As to quaternary structure, homotrimer. It depends on a divalent metal cation as a cofactor.

The enzyme catalyses 4-CDP-2-C-methyl-D-erythritol 2-phosphate = 2-C-methyl-D-erythritol 2,4-cyclic diphosphate + CMP. It participates in isoprenoid biosynthesis; isopentenyl diphosphate biosynthesis via DXP pathway; isopentenyl diphosphate from 1-deoxy-D-xylulose 5-phosphate: step 4/6. Involved in the biosynthesis of isopentenyl diphosphate (IPP) and dimethylallyl diphosphate (DMAPP), two major building blocks of isoprenoid compounds. Catalyzes the conversion of 4-diphosphocytidyl-2-C-methyl-D-erythritol 2-phosphate (CDP-ME2P) to 2-C-methyl-D-erythritol 2,4-cyclodiphosphate (ME-CPP) with a corresponding release of cytidine 5-monophosphate (CMP). This is 2-C-methyl-D-erythritol 2,4-cyclodiphosphate synthase from Lysinibacillus sphaericus (strain C3-41).